A 224-amino-acid polypeptide reads, in one-letter code: Small ribosomal subunit protein uS3 (224 aa).

The 69-residue stretch at 38–106 (IRKFISEKLK…QVHINIVEIK (69 aa)) folds into the KH type-2 domain.

Belongs to the universal ribosomal protein uS3 family. In terms of assembly, part of the 30S ribosomal subunit. Forms a tight complex with proteins S10 and S14.

Functionally, binds the lower part of the 30S subunit head. Binds mRNA in the 70S ribosome, positioning it for translation. This chain is Small ribosomal subunit protein uS3, found in Lactobacillus acidophilus (strain ATCC 700396 / NCK56 / N2 / NCFM).